Reading from the N-terminus, the 171-residue chain is uncharacterized protein (171 aa).

The N-terminal stretch at 1 to 17 (MLKRIIWILFLLGLTWG) is a signal peptide.

In terms of biological role, part of the elfADCG-ycbUVF fimbrial operon, which promotes adhesion of bacteria to different abiotic surfaces. This is an uncharacterized protein from Escherichia coli (strain K12).